The chain runs to 1070 residues: Carbamoyl phosphate synthase large chain (1070 aa).

The carboxyphosphate synthetic domain stretch occupies residues 1-399 (MPKREDIKKV…SLLKAFKSLD (399 aa)). ATP contacts are provided by Arg129, Arg169, Gly175, Gly176, Glu208, Val210, Glu215, Gly241, Val242, His243, Gln284, and Glu296. The region spanning 133–325 (KETMLRIGEK…IARVTAKIAI (193 aa)) is the ATP-grasp 1 domain. Mg(2+) is bound by residues Gln284, Glu296, and Asn298. Residues Gln284, Glu296, and Asn298 each coordinate Mn(2+). Residues 400–540 (IDSQLGNKRW…YSTYEDTCET (141 aa)) are oligomerization domain. The segment at 541–931 (NPTDRKKILI…YKAELAADNL (391 aa)) is carbamoyl phosphate synthetic domain. The ATP-grasp 2 domain occupies 672–863 (YVLMQKFGIL…LAKIAARVIA (192 aa)). ATP-binding residues include Arg708, Asp747, Leu749, Glu754, Gly779, Val780, His781, Ser782, Gln822, and Glu834. Mg(2+)-binding residues include Gln822, Glu834, and Asn836. 3 residues coordinate Mn(2+): Gln822, Glu834, and Asn836. The MGS-like domain maps to 930–1070 (NLLPLTGKVF…INEYHKEMGL (141 aa)). Positions 932–1070 (LPLTGKVFLS…INEYHKEMGL (139 aa)) are allosteric domain.

It belongs to the CarB family. As to quaternary structure, composed of two chains; the small (or glutamine) chain promotes the hydrolysis of glutamine to ammonia, which is used by the large (or ammonia) chain to synthesize carbamoyl phosphate. Tetramer of heterodimers (alpha,beta)4. The cofactor is Mg(2+). Requires Mn(2+) as cofactor.

It catalyses the reaction hydrogencarbonate + L-glutamine + 2 ATP + H2O = carbamoyl phosphate + L-glutamate + 2 ADP + phosphate + 2 H(+). It carries out the reaction hydrogencarbonate + NH4(+) + 2 ATP = carbamoyl phosphate + 2 ADP + phosphate + 2 H(+). It functions in the pathway amino-acid biosynthesis; L-arginine biosynthesis; carbamoyl phosphate from bicarbonate: step 1/1. Its pathway is pyrimidine metabolism; UMP biosynthesis via de novo pathway; (S)-dihydroorotate from bicarbonate: step 1/3. In terms of biological role, large subunit of the glutamine-dependent carbamoyl phosphate synthetase (CPSase). CPSase catalyzes the formation of carbamoyl phosphate from the ammonia moiety of glutamine, carbonate, and phosphate donated by ATP, constituting the first step of 2 biosynthetic pathways, one leading to arginine and/or urea and the other to pyrimidine nucleotides. The large subunit (synthetase) binds the substrates ammonia (free or transferred from glutamine from the small subunit), hydrogencarbonate and ATP and carries out an ATP-coupled ligase reaction, activating hydrogencarbonate by forming carboxy phosphate which reacts with ammonia to form carbamoyl phosphate. The sequence is that of Carbamoyl phosphate synthase large chain from Methanosarcina acetivorans (strain ATCC 35395 / DSM 2834 / JCM 12185 / C2A).